The primary structure comprises 567 residues: Hexose transporter HXT15 (567 aa).

Over residues 1–19 (MASEQSSPEINADNLNSSA) the composition is skewed to polar residues. The disordered stretch occupies residues 1 to 32 (MASEQSSPEINADNLNSSAADVHVQPPGEKEW). The Cytoplasmic portion of the chain corresponds to 1–55 (MASEQSSPEINADNLNSSAADVHVQPPGEKEWSDGFYDKEVINGNTPDAPKRGFL). Residues 56 to 76 (GYLIIYLLCYPVSFGGFLPGW) form a helical membrane-spanning segment. The Extracellular segment spans residues 77–112 (DSGITAGFINMDNFKMNFGSYKHSTGEYYLSNVRMG). The helical transmembrane segment at 113–133 (LLVAMFSVGCSIGGVAFARLA) threads the bilayer. Over 134-139 (DTLGRR) the chain is Cytoplasmic. A helical membrane pass occupies residues 140-160 (LAIVIVVLVYMVGAIIQISSN). Residues 161 to 170 (HKWYQYFVGK) lie on the Extracellular side of the membrane. Residues 171-191 (IIYGLGAGGCSVLCPMLLSEI) traverse the membrane as a helical segment. The Cytoplasmic portion of the chain corresponds to 192-197 (APTDLR). A helical membrane pass occupies residues 198 to 218 (GGLVSLYQLNMTFGIFLGYCS). Residues 219–232 (VYGTRKYSNTAQWR) lie on the Extracellular side of the membrane. A helical membrane pass occupies residues 233 to 253 (IPVGLCFLWALIIIVGMLLVP). Over 254–336 (ESPRYLIECE…VQTFLQLTGE (83 aa)) the chain is Cytoplasmic. A helical transmembrane segment spans residues 337–353 (NYFFFYGTTIFKSVGLT). Residues 354-359 (DGFETS) are Extracellular-facing. A helical transmembrane segment spans residues 360 to 377 (IVLGTVNFFSTIIAVMVV). The Cytoplasmic segment spans residues 378 to 384 (DKIGRRK). The helical transmembrane segment at 385-405 (CLLFGAASMMACMVIFASIGV) threads the bilayer. At 406–427 (KCLYPHGQDGPSSKGAGNAMIV) the chain is on the extracellular side. The chain crosses the membrane as a helical span at residues 428–448 (FTCFYIFCFATTWAPVAYIVV). Topologically, residues 449–465 (AESFPSKVKSKAMSIST) are cytoplasmic. A helical transmembrane segment spans residues 466–486 (AFNWLWQFLIGFFTPFITGSI). Residue His-487 is a topological domain, extracellular. Residues 488-508 (FYYGYVFVGCLVAMFLYVFFF) traverse the membrane as a helical segment. The Cytoplasmic segment spans residues 509-567 (LPETIGLSLEEIQLLYEEGIKPWKSASWVPPSRRGASSRETEAKKKSWKEVLKFPKSFN). Positions 533-555 (SASWVPPSRRGASSRETEAKKKS) are disordered. The span at 545-555 (SSRETEAKKKS) shows a compositional bias: basic and acidic residues.

Belongs to the major facilitator superfamily. Sugar transporter (TC 2.A.1.1) family.

The protein resides in the membrane. In terms of biological role, probable glucose transporter. This Saccharomyces cerevisiae (strain ATCC 204508 / S288c) (Baker's yeast) protein is Hexose transporter HXT15 (HXT15).